The following is a 588-amino-acid chain: Snake venom 5'-nucleotidase (588 aa).

The first 40 residues, M1–G40, serve as a signal peptide directing secretion. Residues D51 and H53 each coordinate Zn(2+). An intrachain disulfide couples C66 to C71. Residues D99 and N131 each contribute to the Zn(2+) site. N167 carries N-linked (GlcNAc...) asparagine glycosylation. Zn(2+) contacts are provided by H234 and H257. N347 and N361 each carry an N-linked (GlcNAc...) asparagine glycan. Intrachain disulfides connect C367–C372 and C379–C401. R368 contributes to the AMP binding site. AMP contacts are provided by N404 and R409. A glycan (N-linked (GlcNAc...) asparagine) is linked at N418. F432 is a binding site for AMP. C491 and C494 are oxidised to a cystine. Positions 515 and 521 each coordinate AMP. N532 carries N-linked (GlcNAc...) asparagine glycosylation. The GPI-anchor amidated serine moiety is linked to residue S564. Positions A565–L588 are cleaved as a propeptide — removed in mature form.

It belongs to the 5'-nucleotidase family. Requires Zn(2+) as cofactor. Post-translationally, venom 5'-nucleotidases (or a part thereof) may be released into the venom via exosome-like vesicles. They may be attached via a GPI anchor to the membrane of these vesicles. Soluble forms of 5'-nucleotidase might be released by cleavage of the ectodomain in the exosome-like vesicles or venom gland cells. Expressed by the venom gland.

Its subcellular location is the membrane. The catalysed reaction is a ribonucleoside 5'-phosphate + H2O = a ribonucleoside + phosphate. Functionally, hydrolyzes nucleotides into nucleosides. Snake venom 5'-nucleotidases are widely distributed among venomous snake taxa, but there is a lack of information about their biological activities. They have been shown to inhibit platelet aggregation. This effect may be due to the liberation of inhibitory AMP or adenosine by its action on ADP released upon initiation of aggregation. Venom 5'-nucleotidases are also known to synergistically act in vivo with other toxins like ADPases, phospholipases, and disintegrins to exert a more pronounced anti-coagulant effect. This chain is Snake venom 5'-nucleotidase, found in Crotalus adamanteus (Eastern diamondback rattlesnake).